We begin with the raw amino-acid sequence, 173 residues long: Ferritin, lower subunit (173 aa).

The region spanning 7–156 is the Ferritin-like diiron domain; that stretch reads QNFHQDCEAG…DHITSLKKLW (150 aa). Fe cation is bound by residues Glu59 and His62.

The protein belongs to the ferritin family. In terms of assembly, oligomer of 24 subunits. The functional molecule is roughly spherical and contains a central cavity into which the polymeric mineral iron core is deposited.

Its function is as follows. Stores iron in a soluble, non-toxic, readily available form. Important for iron homeostasis. Iron is taken up in the ferrous form and deposited as ferric hydroxides after oxidation. The protein is Ferritin, lower subunit of Aquarana catesbeiana (American bullfrog).